Reading from the N-terminus, the 557-residue chain is Proline--tRNA ligase (557 aa).

It belongs to the class-II aminoacyl-tRNA synthetase family. ProS type 1 subfamily. As to quaternary structure, homodimer.

Its subcellular location is the cytoplasm. It catalyses the reaction tRNA(Pro) + L-proline + ATP = L-prolyl-tRNA(Pro) + AMP + diphosphate. In terms of biological role, catalyzes the attachment of proline to tRNA(Pro) in a two-step reaction: proline is first activated by ATP to form Pro-AMP and then transferred to the acceptor end of tRNA(Pro). As ProRS can inadvertently accommodate and process non-cognate amino acids such as alanine and cysteine, to avoid such errors it has two additional distinct editing activities against alanine. One activity is designated as 'pretransfer' editing and involves the tRNA(Pro)-independent hydrolysis of activated Ala-AMP. The other activity is designated 'posttransfer' editing and involves deacylation of mischarged Ala-tRNA(Pro). The misacylated Cys-tRNA(Pro) is not edited by ProRS. In Baumannia cicadellinicola subsp. Homalodisca coagulata, this protein is Proline--tRNA ligase.